A 366-amino-acid polypeptide reads, in one-letter code: Flagellar P-ring protein (366 aa).

An N-terminal signal peptide occupies residues 1–22 (MFTRKSVILMAVLLIWSAVSYA).

The protein belongs to the FlgI family. In terms of assembly, the basal body constitutes a major portion of the flagellar organelle and consists of four rings (L,P,S, and M) mounted on a central rod.

The protein resides in the periplasm. It is found in the bacterial flagellum basal body. In terms of biological role, assembles around the rod to form the L-ring and probably protects the motor/basal body from shearing forces during rotation. In Hydrogenovibrio crunogenus (strain DSM 25203 / XCL-2) (Thiomicrospira crunogena), this protein is Flagellar P-ring protein.